Reading from the N-terminus, the 366-residue chain is Protein-glutamate methylesterase/protein-glutamine glutaminase (366 aa).

A Response regulatory domain is found at arginine 5–arginine 123. 4-aspartylphosphate is present on aspartate 56. Positions proline 163 to glutamine 355 constitute a CheB-type methylesterase domain. Catalysis depends on residues serine 175, histidine 201, and aspartate 297.

It belongs to the CheB family. Post-translationally, phosphorylated by CheA. Phosphorylation of the N-terminal regulatory domain activates the methylesterase activity.

It is found in the cytoplasm. It catalyses the reaction [protein]-L-glutamate 5-O-methyl ester + H2O = L-glutamyl-[protein] + methanol + H(+). It carries out the reaction L-glutaminyl-[protein] + H2O = L-glutamyl-[protein] + NH4(+). Functionally, involved in chemotaxis. Part of a chemotaxis signal transduction system that modulates chemotaxis in response to various stimuli. Catalyzes the demethylation of specific methylglutamate residues introduced into the chemoreceptors (methyl-accepting chemotaxis proteins or MCP) by CheR. Also mediates the irreversible deamidation of specific glutamine residues to glutamic acid. This is Protein-glutamate methylesterase/protein-glutamine glutaminase from Nocardioides sp. (strain ATCC BAA-499 / JS614).